Here is a 233-residue protein sequence, read N- to C-terminus: Leucyl/phenylalanyl-tRNA--protein transferase (233 aa).

The protein belongs to the L/F-transferase family.

The protein resides in the cytoplasm. The enzyme catalyses N-terminal L-lysyl-[protein] + L-leucyl-tRNA(Leu) = N-terminal L-leucyl-L-lysyl-[protein] + tRNA(Leu) + H(+). It catalyses the reaction N-terminal L-arginyl-[protein] + L-leucyl-tRNA(Leu) = N-terminal L-leucyl-L-arginyl-[protein] + tRNA(Leu) + H(+). The catalysed reaction is L-phenylalanyl-tRNA(Phe) + an N-terminal L-alpha-aminoacyl-[protein] = an N-terminal L-phenylalanyl-L-alpha-aminoacyl-[protein] + tRNA(Phe). Functions in the N-end rule pathway of protein degradation where it conjugates Leu, Phe and, less efficiently, Met from aminoacyl-tRNAs to the N-termini of proteins containing an N-terminal arginine or lysine. This is Leucyl/phenylalanyl-tRNA--protein transferase from Shewanella denitrificans (strain OS217 / ATCC BAA-1090 / DSM 15013).